A 344-amino-acid polypeptide reads, in one-letter code: MFSTQTFFFFPTAPFILFVFTASTIFHLHQRLEKMQPTWELEALEPATMETPSRPQPRPQLKGMWTINAIGRLGNQMGEYATLYALAKMNGRAAFIPPQMHSTLAPIFRITLPVLHDATARSVPWQNYHLNDWMEEQYRHIPGEYVRLTGYPCSWTFYHHLRAEILQEFTLHAHVREEAQNFLRGLRVNGSRPSTYVGVHVRRGDYVHVMPNVWKGVVADRRYLEQALDWFRARYSAPIFVVSSNGMAWCRENINASRGDVVFAGNGNEGSPAKDFALLTQCNHTIMTIGTFGIWAAYLAGGETIYLANYTLPDSPFLKIFKPEAAFLPKWIGIPADLSPLLKH.

At 1-7 (MFSTQTF) the chain is on the cytoplasmic side. Residues 8-28 (FFFPTAPFILFVFTASTIFHL) form a helical; Signal-anchor for type II membrane protein membrane-spanning segment. The Lumenal portion of the chain corresponds to 29–344 (HQRLEKMQPT…PADLSPLLKH (316 aa)). Asn189, Asn255, Asn283, and Asn309 each carry an N-linked (GlcNAc...) asparagine glycan.

As to expression, expressed in brain, heart, lung, intestin and kidney.

The protein resides in the golgi apparatus. It localises to the golgi stack membrane. The catalysed reaction is a beta-D-galactosyl-(1-&gt;3)-N-acetyl-beta-D-glucosaminyl derivative + GDP-beta-L-fucose = an alpha-L-Fuc-(1-&gt;2)-beta-D-Gal-(1-&gt;3)-beta-D-GlcNAc derivative + GDP + H(+). The enzyme catalyses a beta-D-galactosyl-(1-&gt;4)-N-acetyl-beta-D-glucosaminyl derivative + GDP-beta-L-fucose = an alpha-L-Fuc-(1-&gt;2)-beta-D-Gal-(1-&gt;4)-beta-D-GlcNAc derivative + GDP + H(+). It carries out the reaction a ganglioside GM1 + GDP-beta-L-fucose = a ganglioside Fuc-GM1 + GDP + H(+). It catalyses the reaction a neolactoside nLc4Cer + GDP-beta-L-fucose = a neolactoside IV(2)-alpha-Fuc-nLc4Cer + GDP + H(+). The catalysed reaction is a neolactoside nLc4Cer(d18:1(4E)) + GDP-beta-L-fucose = a neolactoside IV(2)-alpha-Fuc-nLc4Cer(d18:1(4E)) + GDP + H(+). The enzyme catalyses a ganglioside GA1 + GDP-beta-L-fucose = a ganglioside Fuc-GA1 + GDP + H(+). It carries out the reaction Lc4Cer + GDP-beta-L-fucose = alpha-L-fucosyl-(1-&gt;2)-beta-D-galactosyl-(1-&gt;3)-N-acetyl-beta-D-glucosaminyl-(1-&gt;3)-beta-D-galactosyl-(1-&gt;4)-beta-D-glucosyl-(1&lt;-&gt;1')-ceramide + GDP + H(+). It catalyses the reaction a beta-D-Gal-(1-&gt;3)-beta-D-GlcNAc-(1-&gt;3)-beta-D-Gal-(1-&gt;4)-beta-D-Glc-(1&lt;-&gt;1')-Cer(d18:1(4E)) + GDP-beta-L-fucose = alpha-L-fucosyl-(1-&gt;2)- beta-D-galactosyl-(1-&gt;3)-N-acetyl-beta-D-glucosaminyl-(1-&gt;3)-beta-D-galactosyl-(1-&gt;4)-beta-D-glucosyl-(1&lt;-&gt;1')-N-acylsphing-4-enine + GDP + H(+). The catalysed reaction is a ganglioside GD1b + GDP-beta-L-fucose = a ganglioside Fuc-GD1b + GDP + H(+). The enzyme catalyses a ganglioside GM1 (d18:1(4E)) + GDP-beta-L-fucose = a ganglioside Fuc-GM1 (d18:1(4E)) + GDP + H(+). It carries out the reaction a globoside GalGb4Cer (d18:1(4E)) + GDP-beta-L-fucose = a globoside Globo-H (d18:1(4E)) + GDP + H(+). It catalyses the reaction a lactoside III(4)-a-Fuc-Lc4Cer + GDP-beta-L-fucose = a lactoside IV(2),III(4)-a-[Fuc]2-Lc4Cer + GDP + H(+). The catalysed reaction is beta-D-galactosyl-(1-&gt;3)-N-acetyl-D-galactosamine + GDP-beta-L-fucose = alpha-L-fucosyl-(1-&gt;2)-beta-D-galactosyl-(1-&gt;3)-N-acetyl-D-galactosamine + GDP + H(+). It participates in protein modification; protein glycosylation. Catalyzes the transfer of L-fucose, from a guanosine diphosphate-beta-L-fucose, to the terminal galactose on both O- and N-linked glycans chains of cell surface glycoproteins and glycolipids and the resulting epitope regulates several processes such as cell-cell interaction including host-microbe interaction, cell surface expression and cell proliferation. Preferentially fucosylates gangliosides GA1 and GM1 in the antrum, cecum and colon and in the female reproductive organs. Fucosylated host glycoproteins or glycolipids mediate interaction with intestinal microbiota influencing its composition. Creates a soluble precursor oligosaccharide FuC-alpha ((1,2)Galbeta-) called the H antigen which is an essential substrate for the final step in the soluble ABO blood group antigen synthesis pathway. This chain is Galactoside alpha-(1,2)-fucosyltransferase 2, found in Bos taurus (Bovine).